The primary structure comprises 245 residues: MNENLQDLISTKLAAAIANPLFPAVDSQLRSGRHIGQEHLDNYAFLADFQNELDGFYRRYNVELIRAPEGFFYLRPKATTLIARSVLSELEMLVGKVLCYLYLSPERLAQQGIFTVQEVYDELLNLADEAKLLKAVNLRASGSDLDKQKLAEKVRAALGRLRRLGMLYTVGEQNSGKFTISESVFRFGAEVRAGDDPIEAQLRLIRDGEAATPESIAAEKATADDESAVSNEEDFEYDDNQEGAE.

The segment at 213–245 (PESIAAEKATADDESAVSNEEDFEYDDNQEGAE) is disordered. The segment covering 224-245 (DDESAVSNEEDFEYDDNQEGAE) has biased composition (acidic residues).

It belongs to the MukE family. In terms of assembly, interacts, and probably forms a ternary complex, with MukF and MukB. The complex formation is stimulated by calcium or magnesium.

Its subcellular location is the cytoplasm. It is found in the nucleoid. In terms of biological role, involved in chromosome condensation, segregation and cell cycle progression. May participate in facilitating chromosome segregation by condensation DNA from both sides of a centrally located replisome during cell division. Probably acts via its interaction with MukB and MukF. This is Chromosome partition protein MukE from Actinobacillus succinogenes (strain ATCC 55618 / DSM 22257 / CCUG 43843 / 130Z).